We begin with the raw amino-acid sequence, 377 residues long: Dihydroorotate dehydrogenase (quinone) (377 aa).

Residues 82-86 (AGFDK) and T106 contribute to the FMN site. Residue K86 coordinates substrate. 131 to 135 (NRMGF) is a substrate binding site. FMN-binding residues include N159 and N192. Residue N192 coordinates substrate. The active-site Nucleophile is the S195. N197 lines the substrate pocket. 2 residues coordinate FMN: K228 and T256. Substrate is bound at residue 257–258 (NT). Residues G282, G311, and 332 to 333 (YT) each bind FMN.

This sequence belongs to the dihydroorotate dehydrogenase family. Type 2 subfamily. As to quaternary structure, monomer. FMN serves as cofactor.

It localises to the cell membrane. The enzyme catalyses (S)-dihydroorotate + a quinone = orotate + a quinol. It functions in the pathway pyrimidine metabolism; UMP biosynthesis via de novo pathway; orotate from (S)-dihydroorotate (quinone route): step 1/1. Functionally, catalyzes the conversion of dihydroorotate to orotate with quinone as electron acceptor. This chain is Dihydroorotate dehydrogenase (quinone), found in Corynebacterium efficiens (strain DSM 44549 / YS-314 / AJ 12310 / JCM 11189 / NBRC 100395).